Here is an 81-residue protein sequence, read N- to C-terminus: MSGGGVFTDILAAAGRIFEVMVEGHWETVGMLFDSLGKGTMRINRNAYGNLGGGGGSLRGSSPEVSGFAVPTKAVESKFAK.

His-25 lines the a bacteriochlorophyll c pocket.

Belongs to the BChl C/E-binding protein family.

The protein resides in the chlorosome. It localises to the chlorosome envelope. In terms of biological role, component of the photosynthetic apparatus. The light harvesting B740 complex binds bacteriochlorophyll c. The sequence is that of Bacteriochlorophyll c-binding protein (csmA) from Prosthecochloris aestuarii (strain DSM 271 / SK 413).